Reading from the N-terminus, the 175-residue chain is Large ribosomal subunit protein bL9 (175 aa).

It belongs to the bacterial ribosomal protein bL9 family.

Functionally, binds to the 23S rRNA. This is Large ribosomal subunit protein bL9 from Orientia tsutsugamushi (strain Boryong) (Rickettsia tsutsugamushi).